A 26-amino-acid polypeptide reads, in one-letter code: GVKDYFKKLLQKVINKIKSFRKKQEA.

As to expression, expressed by the venom gland.

Its subcellular location is the secreted. Functionally, may have cytolytic and antimicrobial activity. In Oxyopes takobius (Lynx spider), this protein is Oxyopinin-3b.